The sequence spans 626 residues: Biosynthetic arginine decarboxylase (626 aa).

Lys-99 is modified (N6-(pyridoxal phosphate)lysine). 279-289 (VDVGGGLGVDY) contributes to the substrate binding site.

It belongs to the Orn/Lys/Arg decarboxylase class-II family. SpeA subfamily. The cofactor is Mg(2+). Pyridoxal 5'-phosphate is required as a cofactor.

It catalyses the reaction L-arginine + H(+) = agmatine + CO2. The protein operates within amine and polyamine biosynthesis; agmatine biosynthesis; agmatine from L-arginine: step 1/1. Functionally, catalyzes the biosynthesis of agmatine from arginine. The protein is Biosynthetic arginine decarboxylase of Chromobacterium violaceum (strain ATCC 12472 / DSM 30191 / JCM 1249 / CCUG 213 / NBRC 12614 / NCIMB 9131 / NCTC 9757 / MK).